We begin with the raw amino-acid sequence, 366 residues long: Methyltransferase phm5 (366 aa).

S-adenosyl-L-methionine-binding positions include Gly-204–Gly-205, Asp-230, Ser-255–Met-256, Arg-273, and Arg-274.

It belongs to the class I-like SAM-binding methyltransferase superfamily. Cation-independent O-methyltransferase family.

It functions in the pathway secondary metabolite biosynthesis. Its function is as follows. Methyltransferase; part of the gene cluster that mediates the biosynthesis of the trans-fused decalin-containing tetramic acid phomasetin, the stereochemical opposite of the HIV-1 integrase inhibitor equisetin. The PKS module of phm1 together with the enoylreductase phm4 catalyze the formation of the polyketide unit which is then conjugated to L-serine by the condensation domain of the phm1 NRPS module. Activity of the Dieckmann cyclase domain (RED) of phm1 results in release of the Dieckmann product intermediate. The Diels-Alderase phm7 then uses the Dieckmann product of phm1 as substrate and catalyzes the Diels-Alder cycloaddition to form the decalin ring of N-desmethylphomasetin. N-desmethylphomasetin is further methylated to phomasetin by the methyltransferase phm5. The protein is Methyltransferase phm5 of Pyrenochaetopsis sp.